A 172-amino-acid polypeptide reads, in one-letter code: Crossover junction endodeoxyribonuclease RuvC (172 aa).

Catalysis depends on residues Asp-7, Glu-68, and Asp-141. Positions 7, 68, and 141 each coordinate Mg(2+).

Belongs to the RuvC family. Homodimer which binds Holliday junction (HJ) DNA. The HJ becomes 2-fold symmetrical on binding to RuvC with unstacked arms; it has a different conformation from HJ DNA in complex with RuvA. In the full resolvosome a probable DNA-RuvA(4)-RuvB(12)-RuvC(2) complex forms which resolves the HJ. It depends on Mg(2+) as a cofactor.

Its subcellular location is the cytoplasm. It catalyses the reaction Endonucleolytic cleavage at a junction such as a reciprocal single-stranded crossover between two homologous DNA duplexes (Holliday junction).. Its function is as follows. The RuvA-RuvB-RuvC complex processes Holliday junction (HJ) DNA during genetic recombination and DNA repair. Endonuclease that resolves HJ intermediates. Cleaves cruciform DNA by making single-stranded nicks across the HJ at symmetrical positions within the homologous arms, yielding a 5'-phosphate and a 3'-hydroxyl group; requires a central core of homology in the junction. The consensus cleavage sequence is 5'-(A/T)TT(C/G)-3'. Cleavage occurs on the 3'-side of the TT dinucleotide at the point of strand exchange. HJ branch migration catalyzed by RuvA-RuvB allows RuvC to scan DNA until it finds its consensus sequence, where it cleaves and resolves the cruciform DNA. This Frankia casuarinae (strain DSM 45818 / CECT 9043 / HFP020203 / CcI3) protein is Crossover junction endodeoxyribonuclease RuvC.